The following is a 203-amino-acid chain: MKLLHIDSSILGDNSASRQLSREVVEAWKAADPSVEVVYRDLAADAIAHFSAATLVAAGTPEDVRDAAQAFEAKLSAETLEEFLAADAVVIGAPMYNFTVPTQLKAWIDRVAVAGKTFRYTEAGPQGLCGNKKVVLVSTAGGLHAGQPTGAGHEDFLKVFLGFIGITDLEIVRAHGLAYGPEQRSQAIDAAQAQIASELFAAA.

Residues serine 9, 15-17, 95-98, and 139-142 each bind FMN; these read SAS, MYNF, and TAGG.

It belongs to the azoreductase type 1 family. As to quaternary structure, homodimer. The cofactor is FMN.

The enzyme catalyses 2 a quinone + NADH + H(+) = 2 a 1,4-benzosemiquinone + NAD(+). It carries out the reaction N,N-dimethyl-1,4-phenylenediamine + anthranilate + 2 NAD(+) = 2-(4-dimethylaminophenyl)diazenylbenzoate + 2 NADH + 2 H(+). Quinone reductase that provides resistance to thiol-specific stress caused by electrophilic quinones. In terms of biological role, also exhibits azoreductase activity. Catalyzes the reductive cleavage of the azo bond in aromatic azo compounds to the corresponding amines. In Pseudomonas putida (strain ATCC 47054 / DSM 6125 / CFBP 8728 / NCIMB 11950 / KT2440), this protein is FMN-dependent NADH:quinone oxidoreductase 1.